A 182-amino-acid polypeptide reads, in one-letter code: Glycerol-3-phosphate acyltransferase 1 (182 aa).

The next 5 membrane-spanning stretches (helical) occupy residues 5 to 25 (MQFL…AYIV), 54 to 74 (GYFV…VSIA), 81 to 101 (STFL…PILF), 117 to 137 (IAFD…FYLI), and 157 to 177 (ILYS…VLIL).

The protein belongs to the PlsY family. As to quaternary structure, probably interacts with PlsX.

Its subcellular location is the cell membrane. The enzyme catalyses an acyl phosphate + sn-glycerol 3-phosphate = a 1-acyl-sn-glycero-3-phosphate + phosphate. It functions in the pathway lipid metabolism; phospholipid metabolism. Catalyzes the transfer of an acyl group from acyl-phosphate (acyl-PO(4)) to glycerol-3-phosphate (G3P) to form lysophosphatidic acid (LPA). This enzyme utilizes acyl-phosphate as fatty acyl donor, but not acyl-CoA or acyl-ACP. This Bacillus thuringiensis subsp. konkukian (strain 97-27) protein is Glycerol-3-phosphate acyltransferase 1.